Here is a 67-residue protein sequence, read N- to C-terminus: Small ribosomal subunit protein eS27 (67 aa).

Residues Cys-22, Cys-25, Cys-41, and Cys-44 each coordinate Zn(2+). The C4-type zinc-finger motif lies at 22 to 44 (CPDCGNEQVTFSHAAMVVRCLVC).

It belongs to the eukaryotic ribosomal protein eS27 family. Part of the 30S ribosomal subunit. Zn(2+) serves as cofactor.

The polypeptide is Small ribosomal subunit protein eS27 (Pyrobaculum neutrophilum (strain DSM 2338 / JCM 9278 / NBRC 100436 / V24Sta) (Thermoproteus neutrophilus)).